Here is a 153-residue protein sequence, read N- to C-terminus: Ribosome maturation factor RimP (153 aa).

It belongs to the RimP family.

It is found in the cytoplasm. Its function is as follows. Required for maturation of 30S ribosomal subunits. This is Ribosome maturation factor RimP from Nostoc punctiforme (strain ATCC 29133 / PCC 73102).